The following is a 95-amino-acid chain: Co-chaperonin GroES (95 aa).

This sequence belongs to the GroES chaperonin family. Heptamer of 7 subunits arranged in a ring. Interacts with the chaperonin GroEL.

The protein localises to the cytoplasm. Functionally, together with the chaperonin GroEL, plays an essential role in assisting protein folding. The GroEL-GroES system forms a nano-cage that allows encapsulation of the non-native substrate proteins and provides a physical environment optimized to promote and accelerate protein folding. GroES binds to the apical surface of the GroEL ring, thereby capping the opening of the GroEL channel. The chain is Co-chaperonin GroES from Chlorobaculum parvum (strain DSM 263 / NCIMB 8327) (Chlorobium vibrioforme subsp. thiosulfatophilum).